The sequence spans 458 residues: ATP synthase subunit beta (458 aa).

148–155 (GGAGVGKT) contributes to the ATP binding site.

Belongs to the ATPase alpha/beta chains family. F-type ATPases have 2 components, CF(1) - the catalytic core - and CF(0) - the membrane proton channel. CF(1) has five subunits: alpha(3), beta(3), gamma(1), delta(1), epsilon(1). CF(0) has three main subunits: a(1), b(2) and c(9-12). The alpha and beta chains form an alternating ring which encloses part of the gamma chain. CF(1) is attached to CF(0) by a central stalk formed by the gamma and epsilon chains, while a peripheral stalk is formed by the delta and b chains.

Its subcellular location is the cell inner membrane. The catalysed reaction is ATP + H2O + 4 H(+)(in) = ADP + phosphate + 5 H(+)(out). In terms of biological role, produces ATP from ADP in the presence of a proton gradient across the membrane. The catalytic sites are hosted primarily by the beta subunits. The protein is ATP synthase subunit beta of Shewanella loihica (strain ATCC BAA-1088 / PV-4).